A 364-amino-acid polypeptide reads, in one-letter code: Histidinol-phosphate aminotransferase (364 aa).

Lysine 226 bears the N6-(pyridoxal phosphate)lysine mark.

Belongs to the class-II pyridoxal-phosphate-dependent aminotransferase family. Histidinol-phosphate aminotransferase subfamily. Homodimer. The cofactor is pyridoxal 5'-phosphate.

The catalysed reaction is L-histidinol phosphate + 2-oxoglutarate = 3-(imidazol-4-yl)-2-oxopropyl phosphate + L-glutamate. It functions in the pathway amino-acid biosynthesis; L-histidine biosynthesis; L-histidine from 5-phospho-alpha-D-ribose 1-diphosphate: step 7/9. The protein is Histidinol-phosphate aminotransferase of Campylobacter jejuni subsp. jejuni serotype O:2 (strain ATCC 700819 / NCTC 11168).